Here is a 108-residue protein sequence, read N- to C-terminus: Nucleoid-associated protein BMASAVP1_A1850 (108 aa).

The tract at residues 84 to 108 (EATSQEKMSGMTSGLPLPPGFKLPF) is disordered. Residues 85–95 (ATSQEKMSGMT) show a composition bias toward polar residues. Residues 99-108 (PLPPGFKLPF) show a composition bias toward pro residues.

The protein belongs to the YbaB/EbfC family. As to quaternary structure, homodimer.

The protein resides in the cytoplasm. It localises to the nucleoid. Functionally, binds to DNA and alters its conformation. May be involved in regulation of gene expression, nucleoid organization and DNA protection. This Burkholderia mallei (strain SAVP1) protein is Nucleoid-associated protein BMASAVP1_A1850.